A 296-amino-acid polypeptide reads, in one-letter code: Polyamine aminopropyltransferase (296 aa).

The PABS domain maps to Glu-5 to Gln-238. Gln-33 contacts S-methyl-5'-thioadenosine. His-64 and Asp-88 together coordinate spermidine. Residues Glu-108 and Asp-140–Gly-141 contribute to the S-methyl-5'-thioadenosine site. Asp-158 serves as the catalytic Proton acceptor. Asp-158–Asp-161 lines the spermidine pocket. Pro-165 is a binding site for S-methyl-5'-thioadenosine.

The protein belongs to the spermidine/spermine synthase family. Homodimer or homotetramer.

It is found in the cytoplasm. The enzyme catalyses S-adenosyl 3-(methylsulfanyl)propylamine + putrescine = S-methyl-5'-thioadenosine + spermidine + H(+). It functions in the pathway amine and polyamine biosynthesis; spermidine biosynthesis; spermidine from putrescine: step 1/1. Its function is as follows. Catalyzes the irreversible transfer of a propylamine group from the amino donor S-adenosylmethioninamine (decarboxy-AdoMet) to putrescine (1,4-diaminobutane) to yield spermidine. The sequence is that of Polyamine aminopropyltransferase from Yersinia pseudotuberculosis serotype O:1b (strain IP 31758).